Reading from the N-terminus, the 119-residue chain is Large ribosomal subunit protein uL18 (119 aa).

This sequence belongs to the universal ribosomal protein uL18 family. In terms of assembly, part of the 50S ribosomal subunit; part of the 5S rRNA/L5/L18/L25 subcomplex. Contacts the 5S and 23S rRNAs.

This is one of the proteins that bind and probably mediate the attachment of the 5S RNA into the large ribosomal subunit, where it forms part of the central protuberance. This chain is Large ribosomal subunit protein uL18, found in Helicobacter pylori (strain HPAG1).